The following is a 280-amino-acid chain: MEPILHIQGDAHSSLTPLIFIHAVSGLAWPYMALGNLSNTSDPARSRPVYGISSPVYSSELQPHGPYLLGGWSMGGMIAVKMAEILQAKKETVQQVILLDSINPEKYPAFVNEEEHRIIADGLFTNVCQAMGMADLADDSDDEDNRSDASDASDDGSTMSDEEEEDDNLHRLFSTMRRHIHASTLSISSTEPGKLLPPNSVCHTSVTLVKCTQLSETVPALFSARQRCIRRCALHPTLQWRPQNFDRFRTLLIDARHDSLFDEEHVEEVTSMLRQILESC.

Over residues 136-145 the composition is skewed to acidic residues; the sequence is LADDSDDEDN. The segment at 136 to 167 is disordered; the sequence is LADDSDDEDNRSDASDASDDGSTMSDEEEEDD.

The protein belongs to the AMT4 thioesterase family.

It participates in secondary metabolite biosynthesis. In terms of biological role, thioesterase; part of the gene cluster that mediates the biosynthesis of pyranonigrins, a family of antioxidative compounds. The first step of pyranonigrins biosynthesis is performed by the hybrid PKS-NRPS synthetase that condenses 6 malonyl-CoA units to an acetyl starter unit, to form a 1,3,5-trioxotetradecane-6,8-dienyl-ACP. The enoyl reductase (ER) domain of pynA is likely to be functional during the first two rounds of polyketide chain extension, to generate the saturated C-C bonds of the alkyl side chain. PynA subsequently forms the amide bond between the acyl chain and L-serine. Although pynA has a terminal reductase domain, it appears to require the thioesterase pynI for the release of the straight-chain intermediate from pynA via the formation of a tetramic acid pyranonigrin J. The methyltransferase pynC then coverts pyranonigrin J to pyranonigrin I via N-methylation. The FAD-dependent monooxygenase pynG catalyzes an epoxidation-mediated cyclization to form the dihydro-gamma-pyrone moiety, followed by pynD-catalyzed oxidation of the alcohol to the ketone and enolization to yield the characteristic tetramic acid-fused gamma-pyrone core of pyranonigrin H. Pyranonigrin H is substrate of pynH for dehydration-mediated exo-methylene formation from the serine side chain to produce pyranonigrin E, before the oxidase pynE reduces the exo-methylene of pyranonigrin E into a pendant methyl to form pyranonigrin G. The FAD-linked oxidoreductase pynB performs the reverse reaction and converts pyranonigrin G back to pyranonigrin E. The protein is Thioesterase pynI of Aspergillus niger (strain ATCC MYA-4892 / CBS 513.88 / FGSC A1513).